Consider the following 223-residue polypeptide: Cytidylate kinase (223 aa).

13–21 (GPSASGKGT) contacts ATP.

The protein belongs to the cytidylate kinase family. Type 1 subfamily.

It localises to the cytoplasm. The catalysed reaction is CMP + ATP = CDP + ADP. The enzyme catalyses dCMP + ATP = dCDP + ADP. The chain is Cytidylate kinase from Nitrosomonas europaea (strain ATCC 19718 / CIP 103999 / KCTC 2705 / NBRC 14298).